An 819-amino-acid chain; its full sequence is Cadherin-24 (819 aa).

A signal peptide spans M1–G19. Positions L21–R44 are excised as a propeptide. Over S45–A641 the chain is Extracellular. Cadherin domains follow at residues W46–F150, P151–F259, P260–F374, T375–L517, and L517–A630. 3 N-linked (GlcNAc...) asparagine glycosylation sites follow: N446, N548, and N563. Residues L642–L662 form a helical membrane-spanning segment. Topologically, residues R663–P819 are cytoplasmic. The tract at residues Y768–W800 is disordered. A compositionally biased stretch (low complexity) spans R771 to G784.

As to quaternary structure, associates with alpha-, beta- and delta-catenins.

It localises to the cell membrane. Functionally, cadherins are calcium-dependent cell adhesion proteins. They preferentially interact with themselves in a homophilic manner in connecting cells; cadherins may thus contribute to the sorting of heterogeneous cell types. Cadherin-24 mediate strong cell-cell adhesion. The polypeptide is Cadherin-24 (CDH24) (Homo sapiens (Human)).